The primary structure comprises 27 residues: Carcinustatin-20 (27 aa).

Leucine amide is present on Leu-27.

Belongs to the allatostatin family.

The protein resides in the secreted. Functionally, may act as a neurotransmitter or neuromodulator. This is Carcinustatin-20 from Carcinus maenas (Common shore crab).